An 868-amino-acid polypeptide reads, in one-letter code: DNA topoisomerase 1 (868 aa).

In terms of domain architecture, Toprim spans 3 to 148 (KSLVIVESPA…RFSRVVFNEI (146 aa)). Mg(2+) contacts are provided by Glu9 and Asp117. The Topo IA-type catalytic domain maps to 164-581 (NMDRVNAQQT…QFFKDFSSQL (418 aa)). Residues 198 to 203 (SAGRVQ) are interaction with DNA. Residue Tyr325 is the O-(5'-phospho-DNA)-tyrosine intermediate of the active site. 3 consecutive C4-type zinc fingers follow at residues 605–636 (CPTC…KERC), 667–694 (CTKC…NPNC), and 716–739 (CDKC…CTNC).

This sequence belongs to the type IA topoisomerase family. As to quaternary structure, monomer. It depends on Mg(2+) as a cofactor.

The catalysed reaction is ATP-independent breakage of single-stranded DNA, followed by passage and rejoining.. In terms of biological role, releases the supercoiling and torsional tension of DNA, which is introduced during the DNA replication and transcription, by transiently cleaving and rejoining one strand of the DNA duplex. Introduces a single-strand break via transesterification at a target site in duplex DNA. The scissile phosphodiester is attacked by the catalytic tyrosine of the enzyme, resulting in the formation of a DNA-(5'-phosphotyrosyl)-enzyme intermediate and the expulsion of a 3'-OH DNA strand. The free DNA strand then undergoes passage around the unbroken strand, thus removing DNA supercoils. Finally, in the religation step, the DNA 3'-OH attacks the covalent intermediate to expel the active-site tyrosine and restore the DNA phosphodiester backbone. The polypeptide is DNA topoisomerase 1 (Haemophilus influenzae (strain ATCC 51907 / DSM 11121 / KW20 / Rd)).